We begin with the raw amino-acid sequence, 48 residues long: MMENSSSETYSLLIAMVTITFGLTGYGLYTAFGPPSKELEDPFEEHED.

Residues 12 to 34 traverse the membrane as a helical segment; that stretch reads LLIAMVTITFGLTGYGLYTAFGP.

It belongs to the PsbN family.

The protein resides in the cellular thylakoid membrane. Its function is as follows. May play a role in photosystem I and II biogenesis. This is Protein PsbN from Prochlorococcus marinus (strain MIT 9313).